Here is a 227-residue protein sequence, read N- to C-terminus: Type II restriction enzyme HhaII (227 aa).

Homodimer.

It carries out the reaction Endonucleolytic cleavage of DNA to give specific double-stranded fragments with terminal 5'-phosphates.. Functionally, a P subtype restriction enzyme that recognizes the double-stranded sequence 5'-GANTC-3' and cleaves after G-1. In Haemophilus parahaemolyticus, this protein is Type II restriction enzyme HhaII (hhaIIR).